The following is a 246-amino-acid chain: UDP-N-acetyl-D-mannosaminuronic acid transferase (246 aa).

It belongs to the glycosyltransferase 26 family.

The catalysed reaction is UDP-N-acetyl-alpha-D-mannosaminouronate + N-acetyl-alpha-D-glucosaminyl-di-trans,octa-cis-undecaprenyl diphosphate = beta-D-ManNAcA-(1-&gt;4)-alpha-D-GlcNAc-di-trans,octa-cis-undecaprenyl diphosphate + UDP + H(+). Its pathway is bacterial outer membrane biogenesis; enterobacterial common antigen biosynthesis. Catalyzes the synthesis of Und-PP-GlcNAc-ManNAcA (Lipid II), the second lipid-linked intermediate involved in enterobacterial common antigen (ECA) synthesis. The chain is UDP-N-acetyl-D-mannosaminuronic acid transferase from Salmonella paratyphi A (strain ATCC 9150 / SARB42).